Consider the following 150-residue polypeptide: Large ribosomal subunit protein bL9 (150 aa).

This sequence belongs to the bacterial ribosomal protein bL9 family.

Its function is as follows. Binds to the 23S rRNA. The sequence is that of Large ribosomal subunit protein bL9 from Lactococcus lactis subsp. cremoris (strain SK11).